Here is an 846-residue protein sequence, read N- to C-terminus: MSRFTSATHGLNLSIKMPISVSQVPSIRSNTSKYELQKLRSTGRSVLQTRRQLAIINMTKRSEADDNDGVERRKGVFHPNLWDDGFIQSLSTVYHEQASYRERAERLIGEVKAVFDSISMGDGDQFISPSAYDTAWVARVPAIDGSSRPQFPQAIDWILLNQQQDGSWGSQSHLSLTHRLTDTLACVIALASWKIESVQIDEGLDFITRGVEKLQSESVPAEFEIIFAELLNQAKSLQLSLPYEHSCLQSLWRKQEPILANGLMDSVAKRSLSSLEEMQDHRMNTDSDGTMHVESFLSSPAVAARVLMRTGNPICLAYLNNVLNKFGDYVPGMYPVDLFQRLWMVDNVERLGIDRHFKKEIQVTLDYVYSYWNGKGIGCGRDSLSPDLNSTSLGFRTLRLHGYNVSADVLEHFKDRDGKFVCSSNPTVGEIRSVLNLYRASLLAFPGEKVMEEAETFARRYLEEIVQKIPPSKFSREIEYVLEFGWQSTVPRWEARSYIDFHGLDTYSPWTIYEMASEKFLELAKLEFNIFNSLQHTELQYLSRWWNDSGMSQMRFTRHRNVEYYTMASCIAMEPSQSAFRIGFTKLCGIATCIDDIYDTYGTIDELKLFREAVKRWDPSAIESLPEYMKSVYMVLYELVNEMAQDTERTQGRDTLDYARNAWEAIIDAHLVEAEWIASGHIPTFEEYLENSKVTSGLHIAILPILTLDVPLPDQLPLQEIDTLSRFHHLASTIGRLSGDMNAYKIDLAHGEESSCISCYMKDNPGTTEGDAHNYANVTISYLMKELNLELMGQHNRVSFLRTSKKPAFDIYRASNYMYKYRDGYTIADKETKNLVMRTLVQAVSL.

A chloroplast-targeting transit peptide spans 1–58; sequence MSRFTSATHGLNLSIKMPISVSQVPSIRSNTSKYELQKLRSTGRSVLQTRRQLAIINM. Mg(2+)-binding residues include Asp595, Asp599, and Asp747. Residues 595 to 599 carry the DDXXD motif motif; it reads DDIYD.

It belongs to the terpene synthase family. Mg(2+) serves as cofactor. In terms of tissue distribution, expressed in young and mature roots. Expressed at low levels in barks.

It is found in the plastid. The protein resides in the chloroplast. It carries out the reaction (2E,6E,10E)-geranylgeranyl diphosphate = pseudolaratriene + diphosphate. Its pathway is terpene metabolism. Converts geranylgeranyl diphosphate to an new 5,7-fused bicyclic diterpene, named pseudolaratriene. Catalyzes the first committed step in pseudolaric acid B (PAB) biosynthesis. PAB exhibits antiproliferative activity by inhibiting microtubule polymerization, and has demonstrated antitumor properties against several cancer types. This Pseudolarix amabilis (Golden larch) protein is Pseudolaratriene synthase, chloroplastic.